We begin with the raw amino-acid sequence, 202 residues long: Thymidylate kinase (202 aa).

7-14 (GTEGVGKT) contributes to the ATP binding site.

This sequence belongs to the thymidylate kinase family.

It carries out the reaction dTMP + ATP = dTDP + ADP. Its function is as follows. Phosphorylation of dTMP to form dTDP in both de novo and salvage pathways of dTTP synthesis. This Acinetobacter baylyi (strain ATCC 33305 / BD413 / ADP1) protein is Thymidylate kinase.